The primary structure comprises 315 residues: NADH-ubiquinone oxidoreductase chain 1 (315 aa).

8 helical membrane passes run 6 to 26 (FILS…SVAF), 80 to 100 (ISPI…PFFV), 107 to 127 (LGGL…MIAG), 153 to 173 (LALI…MYFF), 177 to 197 (IYIW…TISL), 229 to 249 (LIFM…CVIF), 253 to 273 (DVFN…FIWA), and 292 to 312 (CFLS…ILLF).

Belongs to the complex I subunit 1 family.

Its subcellular location is the mitochondrion inner membrane. It catalyses the reaction a ubiquinone + NADH + 5 H(+)(in) = a ubiquinol + NAD(+) + 4 H(+)(out). Its function is as follows. Core subunit of the mitochondrial membrane respiratory chain NADH dehydrogenase (Complex I) that is believed to belong to the minimal assembly required for catalysis. Complex I functions in the transfer of electrons from NADH to the respiratory chain. The immediate electron acceptor for the enzyme is believed to be ubiquinone. This is NADH-ubiquinone oxidoreductase chain 1 (mt:ND1) from Drosophila persimilis (Fruit fly).